A 387-amino-acid polypeptide reads, in one-letter code: DNA double-strand break repair protein Mre11 (387 aa).

Residues D11, H13, D52, and D87 each contribute to the Mn(2+) site. The Proton donor role is filled by H88. Residues H159, H190, and H192 each contribute to the Mn(2+) site.

It belongs to the MRE11/RAD32 family. As to quaternary structure, homodimer. Forms a heterotetramer composed of two Mre11 subunits and two Rad50 subunits. Interacts with HerA. The cofactor is Mn(2+).

Nuclease activity is regulated by Rad50. In terms of biological role, part of the Rad50/Mre11 complex, which is involved in the early steps of DNA double-strand break (DSB) repair. The complex may facilitate opening of the processed DNA ends to aid in the recruitment of HerA and NurA. Mre11 binds to DSB ends and has both double-stranded 3'-5' exonuclease activity and single-stranded endonuclease activity. The protein is DNA double-strand break repair protein Mre11 of Sulfurisphaera tokodaii (strain DSM 16993 / JCM 10545 / NBRC 100140 / 7) (Sulfolobus tokodaii).